We begin with the raw amino-acid sequence, 274 residues long: Glutamate racemase (274 aa).

Substrate-binding positions include 9 to 10 (DS) and 41 to 42 (YG). Cys-73 serves as the catalytic Proton donor/acceptor. 74-75 (NT) lines the substrate pocket. The active-site Proton donor/acceptor is Cys-183. 184-185 (TH) lines the substrate pocket.

This sequence belongs to the aspartate/glutamate racemases family.

It carries out the reaction L-glutamate = D-glutamate. It functions in the pathway cell wall biogenesis; peptidoglycan biosynthesis. In terms of biological role, provides the (R)-glutamate required for cell wall biosynthesis. The protein is Glutamate racemase of Shewanella baltica (strain OS155 / ATCC BAA-1091).